A 124-amino-acid chain; its full sequence is Darcynin homolog (124 aa).

It belongs to the darcynin family.

The sequence is that of Darcynin homolog from Granulibacter bethesdensis (strain ATCC BAA-1260 / CGDNIH1).